Here is a 152-residue protein sequence, read N- to C-terminus: 3-hydroxyacyl-[acyl-carrier-protein] dehydratase FabZ (152 aa).

His-57 is a catalytic residue.

This sequence belongs to the thioester dehydratase family. FabZ subfamily.

It is found in the cytoplasm. It carries out the reaction a (3R)-hydroxyacyl-[ACP] = a (2E)-enoyl-[ACP] + H2O. Its function is as follows. Involved in unsaturated fatty acids biosynthesis. Catalyzes the dehydration of short chain beta-hydroxyacyl-ACPs and long chain saturated and unsaturated beta-hydroxyacyl-ACPs. The sequence is that of 3-hydroxyacyl-[acyl-carrier-protein] dehydratase FabZ from Bradyrhizobium sp. (strain BTAi1 / ATCC BAA-1182).